A 482-amino-acid chain; its full sequence is MGSQETNLPPHVLIFPLPIQGHVNSMLRLAELLCLAELDITFIVSEFSHSRLIKHTNVASRFARYPGFQFQPISDGLPDDHPRAGERVMDILPSTKNVTGPLFKQMMVENKCFSSATRRPITCIIADGVLSFAGDFAQEKGIPLIYFRTVSACSFWACFCMPELIESGDIPIKGNGMDLIVKSVPGMETFLRRRDLPGFCRVNDINEPKLQILKTETRQTTRAQAAILNTFEDLEGPILSQIRKHMPRLFTIGPSHSHLTSRLETKNIKTLISSGSFWEEDRSCVDWLDAQPPRSVLYVSFGSITVVTRDQLLEFWYGLVNSGQRFLWVMRPDSIMGKDGQSQIPADLEEGTKARGYMVGWAPQEEVLNHPAIGGFLTHSGWNSTLESIVAGVPMICWPYFADQMINSRFVSEIWKIGLDMKDTCDRETIVKMVRELMEIRKDEFLQRADHMAKLAKEAVSEGGSSYSNLDGLVDYIKSLII.

His-22 functions as the Proton acceptor in the catalytic mechanism. His-22 contacts an anthocyanidin. The active-site Charge relay is the Asp-127. UDP-alpha-D-glucose is bound by residues Thr-149, Ala-362, Gln-364, His-379, Trp-382, Asn-383, Ser-384, and Glu-387. An an anthocyanidin-binding site is contributed by Ala-402. Positions 403 and 404 each coordinate UDP-alpha-D-glucose.

It belongs to the UDP-glycosyltransferase family. As to expression, expressed in the leaf internal phloem-associated parenchyma (IPAP) inside the mesophyll. Mostly observed in leaves, roots and stems, and, to a lower extent, in flowers.

Its subcellular location is the nucleus. The protein localises to the cytoplasm. The protein resides in the cytosol. The catalysed reaction is 7-deoxyloganetate + UDP-alpha-D-glucose = 7-deoxyloganate + UDP + H(+). The protein operates within alkaloid biosynthesis. Component of the seco-iridoid and derivatives monoterpenoid indole alkaloids (MIAs, e.g. vincristine, quinine, and strychnine) biosynthesis pathway. Catalyzes the glucosylation of 7-deoxyloganetic acid to form 7-deoxyloganic acid using UDP-glucose as the sugar donor. Inactive with loganetic acid, loganetin, iridodial, iridotrial, 8-OH-geraniol, jasmonic acid, gibberellic acid, indole acetic acid, salicylic acid, abscisic acid, zeatin and luteolin. This Catharanthus roseus (Madagascar periwinkle) protein is 7-deoxyloganetic acid glucosyl transferase.